An 88-amino-acid polypeptide reads, in one-letter code: Large ribosomal subunit protein bL31B (88 aa).

The protein belongs to the bacterial ribosomal protein bL31 family. Type B subfamily. As to quaternary structure, part of the 50S ribosomal subunit.

The protein is Large ribosomal subunit protein bL31B of Burkholderia orbicola (strain MC0-3).